A 111-amino-acid polypeptide reads, in one-letter code: T cell receptor beta variable 20-1 (111 aa).

The first 15 residues, methionine 1–glycine 15, serve as a signal peptide directing secretion. Residues alanine 16–arginine 111 form the Ig-like domain. The cysteines at positions 37 and 108 are disulfide-linked.

In terms of assembly, alpha-beta TR is a heterodimer composed of an alpha and beta chain; disulfide-linked. The alpha-beta TR is associated with the transmembrane signaling CD3 coreceptor proteins to form the TR-CD3 (TcR or TCR). The assembly of alpha-beta TR heterodimers with CD3 occurs in the endoplasmic reticulum where a single alpha-beta TR heterodimer associates with one CD3D-CD3E heterodimer, one CD3G-CD3E heterodimer and one CD247 homodimer forming a stable octameric structure. CD3D-CD3E and CD3G-CD3E heterodimers preferentially associate with TR alpha and TR beta chains, respectively. The association of the CD247 homodimer is the last step of TcR assembly in the endoplasmic reticulum and is required for transport to the cell surface.

The protein localises to the cell membrane. Functionally, v region of the variable domain of T cell receptor (TR) beta chain that participates in the antigen recognition. Alpha-beta T cell receptors are antigen specific receptors which are essential to the immune response and are present on the cell surface of T lymphocytes. Recognize peptide-major histocompatibility (MH) (pMH) complexes that are displayed by antigen presenting cells (APC), a prerequisite for efficient T cell adaptive immunity against pathogens. Binding of alpha-beta TR to pMH complex initiates TR-CD3 clustering on the cell surface and intracellular activation of LCK that phosphorylates the ITAM motifs of CD3G, CD3D, CD3E and CD247 enabling the recruitment of ZAP70. In turn ZAP70 phosphorylates LAT, which recruits numerous signaling molecules to form the LAT signalosome. The LAT signalosome propagates signal branching to three major signaling pathways, the calcium, the mitogen-activated protein kinase (MAPK) kinase and the nuclear factor NF-kappa-B (NF-kB) pathways, leading to the mobilization of transcription factors that are critical for gene expression and essential for T cell growth and differentiation. The T cell repertoire is generated in the thymus, by V-(D)-J rearrangement. This repertoire is then shaped by intrathymic selection events to generate a peripheral T cell pool of self-MH restricted, non-autoaggressive T cells. Post-thymic interaction of alpha-beta TR with the pMH complexes shapes TR structural and functional avidity. The polypeptide is T cell receptor beta variable 20-1 (Homo sapiens (Human)).